Reading from the N-terminus, the 478-residue chain is Noelin-3 (478 aa).

Residues 1–23 (MSPPLLKLGAVLSTMAMISNWMS) form the signal peptide. Asparagine 33, asparagine 95, asparagine 179, asparagine 299, and asparagine 465 each carry an N-linked (GlcNAc...) asparagine glycan. Residues 77–217 (CSRDAKSRQL…TRLRDCMKKL (141 aa)) are a coiled coil. The region spanning 218-470 (TCGKLMKITG…QVLFNVTLFH (253 aa)) is the Olfactomedin-like domain. A disulfide bridge connects residues cysteine 219 and cysteine 401.

Peripherally associated with AMPAR complex. AMPAR complex consists of an inner core made of 4 pore-forming GluA/GRIA proteins (GRIA1, GRIA2, GRIA3 and GRIA4) and 4 major auxiliary subunits arranged in a twofold symmetry. One of the two pairs of distinct binding sites is occupied either by CNIH2, CNIH3 or CACNG2, CACNG3. The other harbors CACNG2, CACNG3, CACNG4, CACNG8 or GSG1L. This inner core of AMPAR complex is complemented by outer core constituents binding directly to the GluA/GRIA proteins at sites distinct from the interaction sites of the inner core constituents. Outer core constituents include at least PRRT1, PRRT2, CKAMP44/SHISA9, FRRS1L and NRN1. The proteins of the inner and outer core serve as a platform for other, more peripherally associated AMPAR constituents, including OLFM3. Alone or in combination, these auxiliary subunits control the gating and pharmacology of the AMPAR complex and profoundly impact their biogenesis and protein processing. Homodimer. Interacts with MYOC. Interacts with OLFM2. In the eye, expressed in trabecular meshwork and neural retina; in non-ocular tissues, expressed in brain and lung.

It localises to the secreted. Its subcellular location is the synapse. The sequence is that of Noelin-3 (OLFM3) from Homo sapiens (Human).